Reading from the N-terminus, the 321-residue chain is Beta-ketoacyl-[acyl-carrier-protein] synthase III (321 aa).

Residues cysteine 113 and histidine 248 contribute to the active site. The ACP-binding stretch occupies residues 249–253; that stretch reads QANAR. Residue asparagine 278 is part of the active site.

It belongs to the thiolase-like superfamily. FabH family. Homodimer.

Its subcellular location is the cytoplasm. The enzyme catalyses malonyl-[ACP] + acetyl-CoA + H(+) = 3-oxobutanoyl-[ACP] + CO2 + CoA. It functions in the pathway lipid metabolism; fatty acid biosynthesis. Catalyzes the condensation reaction of fatty acid synthesis by the addition to an acyl acceptor of two carbons from malonyl-ACP. Catalyzes the first condensation reaction which initiates fatty acid synthesis and may therefore play a role in governing the total rate of fatty acid production. Possesses both acetoacetyl-ACP synthase and acetyl transacylase activities. Its substrate specificity determines the biosynthesis of branched-chain and/or straight-chain of fatty acids. The polypeptide is Beta-ketoacyl-[acyl-carrier-protein] synthase III (Erythrobacter litoralis (strain HTCC2594)).